We begin with the raw amino-acid sequence, 78 residues long: Putative Fe(2+) transport protein A (78 aa).

This sequence belongs to the FeoA family.

Might be involved in Fe(2+) ion uptake. The chain is Putative Fe(2+) transport protein A from Helicobacter pylori (strain J99 / ATCC 700824) (Campylobacter pylori J99).